A 258-amino-acid chain; its full sequence is MIVNECLFFTIALCDAAEPWQLGFQDAATPMMQGIIDLHHDILFFLILILVFVLWILVRALWHFYYKKNPIPQRIVHGTTIEILWTIFPSIILMFIAIPSFALLYSMDEVVVDPAMTLKAIGHQWYWTYEYSDYNSSDEQSLTFDSYMIPEDDLELGQLRLLEVDNRVVVPVKTNLRLIVTSADVLHSWAVPSLGVKCDAVPGRLNQISMLVQREGVYYGQCSEICGTNHAFMPIVIEAVSATDYTNWVSNLFIPPTS.

The Mitochondrial intermembrane segment spans residues 1 to 41; the sequence is MIVNECLFFTIALCDAAEPWQLGFQDAATPMMQGIIDLHHD. Residues 42 to 58 form a helical membrane-spanning segment; that stretch reads ILFFLILILVFVLWILV. The Mitochondrial matrix segment spans residues 59–82; the sequence is RALWHFYYKKNPIPQRIVHGTTIE. Residues 83–104 form a helical membrane-spanning segment; that stretch reads ILWTIFPSIILMFIAIPSFALL. Over 105-258 the chain is Mitochondrial intermembrane; it reads YSMDEVVVDP…VSNLFIPPTS (154 aa). 6 residues coordinate Cu cation: H187, C222, E224, C226, H230, and M233. E224 provides a ligand contact to Mg(2+).

It belongs to the cytochrome c oxidase subunit 2 family. In terms of assembly, component of the cytochrome c oxidase (complex IV, CIV), a multisubunit enzyme composed of a catalytic core of 3 subunits and several supernumerary subunits. The complex exists as a monomer or a dimer and forms supercomplexes (SCs) in the inner mitochondrial membrane with ubiquinol-cytochrome c oxidoreductase (cytochrome b-c1 complex, complex III, CIII). Cu cation is required as a cofactor.

The protein localises to the mitochondrion inner membrane. It carries out the reaction 4 Fe(II)-[cytochrome c] + O2 + 8 H(+)(in) = 4 Fe(III)-[cytochrome c] + 2 H2O + 4 H(+)(out). Its function is as follows. Component of the cytochrome c oxidase, the last enzyme in the mitochondrial electron transport chain which drives oxidative phosphorylation. The respiratory chain contains 3 multisubunit complexes succinate dehydrogenase (complex II, CII), ubiquinol-cytochrome c oxidoreductase (cytochrome b-c1 complex, complex III, CIII) and cytochrome c oxidase (complex IV, CIV), that cooperate to transfer electrons derived from NADH and succinate to molecular oxygen, creating an electrochemical gradient over the inner membrane that drives transmembrane transport and the ATP synthase. Cytochrome c oxidase is the component of the respiratory chain that catalyzes the reduction of oxygen to water. Electrons originating from reduced cytochrome c in the intermembrane space (IMS) are transferred via the dinuclear copper A center (CU(A)) of subunit 2 and heme A of subunit 1 to the active site in subunit 1, a binuclear center (BNC) formed by heme A3 and copper B (CU(B)). The BNC reduces molecular oxygen to 2 water molecules using 4 electrons from cytochrome c in the IMS and 4 protons from the mitochondrial matrix. The chain is Cytochrome c oxidase subunit 2 (COX2) from Oenothera berteroana (Bertero's evening primrose).